We begin with the raw amino-acid sequence, 445 residues long: Phosphoglucosamine mutase (445 aa).

Catalysis depends on Ser-101, which acts as the Phosphoserine intermediate. Ser-101, Asp-240, Asp-242, and Asp-244 together coordinate Mg(2+). Ser-101 is subject to Phosphoserine.

This sequence belongs to the phosphohexose mutase family. It depends on Mg(2+) as a cofactor. Activated by phosphorylation.

The enzyme catalyses alpha-D-glucosamine 1-phosphate = D-glucosamine 6-phosphate. Functionally, catalyzes the conversion of glucosamine-6-phosphate to glucosamine-1-phosphate. The chain is Phosphoglucosamine mutase from Azotobacter vinelandii (strain DJ / ATCC BAA-1303).